Here is a 249-residue protein sequence, read N- to C-terminus: MRDVKYVDAHCHIEDKAFNKNRDEVIERAKKEDVIIVTSGASLGGCLRALELRKKYNIYLTLGYHPSRVKADDKVIEKVYNLIKNNEYEILAIGEIGMDIKDENYKRQEEIFKKFLSLAEELNKPIVVHARGFERKIFDIAKDKVDIMFHCYSGDVELAKEIGKEGHLISISTLVCFSEHHKKLVESLDLEYLTTETDSPYLSPIKGTKNEPKNVKLVIEEIAKIKEMEVEEVKDVIYKNTCKFFKRRL.

Positions 10, 12, 95, 129, 150, and 198 each coordinate a divalent metal cation.

The protein belongs to the metallo-dependent hydrolases superfamily. TatD-type hydrolase family. The cofactor is a divalent metal cation.

This is an uncharacterized protein from Methanocaldococcus jannaschii (strain ATCC 43067 / DSM 2661 / JAL-1 / JCM 10045 / NBRC 100440) (Methanococcus jannaschii).